We begin with the raw amino-acid sequence, 183 residues long: Probable transcription termination protein NusA (183 aa).

The KH domain occupies aspartate 32–lysine 98. The tract at residues arginine 149–glutamate 183 is disordered. The segment covering valine 156–glutamate 183 has biased composition (basic and acidic residues).

This sequence belongs to the NusA family.

The protein localises to the cytoplasm. Its function is as follows. Participates in transcription termination. In Methanocaldococcus jannaschii (strain ATCC 43067 / DSM 2661 / JAL-1 / JCM 10045 / NBRC 100440) (Methanococcus jannaschii), this protein is Probable transcription termination protein NusA.